An 806-amino-acid polypeptide reads, in one-letter code: Glycerol-3-phosphate acyltransferase (806 aa).

The HXXXXD motif motif lies at 305–310 (CHRSHM).

This sequence belongs to the GPAT/DAPAT family.

It is found in the cell inner membrane. It carries out the reaction sn-glycerol 3-phosphate + an acyl-CoA = a 1-acyl-sn-glycero-3-phosphate + CoA. The protein operates within phospholipid metabolism; CDP-diacylglycerol biosynthesis; CDP-diacylglycerol from sn-glycerol 3-phosphate: step 1/3. The chain is Glycerol-3-phosphate acyltransferase from Salmonella agona (strain SL483).